The primary structure comprises 43 residues: Structural protein ORF5a (43 aa).

Residues 2-22 form a helical membrane-spanning segment; the sequence is FSQIGAFLDSALLLLVAFFAV.

The protein belongs to the arteriviridae ORF5a protein family. As to quaternary structure, interacts with proteins GP2B and GP4.

The protein localises to the virion. The protein resides in the host cell membrane. In terms of biological role, minor virion component that plays an essential role in virus infectivity. This chain is Structural protein ORF5a, found in Sus scrofa (Pig).